The sequence spans 274 residues: Orotidine 5'-phosphate decarboxylase (274 aa).

Lys-96 (proton donor) is an active-site residue.

It belongs to the OMP decarboxylase family. Type 2 subfamily.

The enzyme catalyses orotidine 5'-phosphate + H(+) = UMP + CO2. It functions in the pathway pyrimidine metabolism; UMP biosynthesis via de novo pathway; UMP from orotate: step 2/2. This is Orotidine 5'-phosphate decarboxylase from Bacteroides fragilis (strain YCH46).